The following is a 632-amino-acid chain: Thioredoxin domain-containing protein C959.05c (632 aa).

An N-terminal signal peptide occupies residues Met-1–Ala-22. 3 N-linked (GlcNAc...) asparagine glycosylation sites follow: Asn-35, Asn-41, and Asn-140. Residues Ser-153–Ser-284 enclose the Thioredoxin domain. A disulfide bond links Cys-209 and Cys-212. Residue Asn-557 is glycosylated (N-linked (GlcNAc...) asparagine). A helical membrane pass occupies residues Leu-583–Ala-603.

This sequence belongs to the protein disulfide isomerase family.

It localises to the endoplasmic reticulum membrane. It catalyses the reaction Catalyzes the rearrangement of -S-S- bonds in proteins.. Functionally, acts as a membrane-bound chaperone in endoplasmic reticulum quality control. Probably facilitates presentation of substrate to membrane-bound components of the degradation machinery. In Schizosaccharomyces pombe (strain 972 / ATCC 24843) (Fission yeast), this protein is Thioredoxin domain-containing protein C959.05c.